A 269-amino-acid polypeptide reads, in one-letter code: Oligoribonuclease, mitochondrial (269 aa).

The 173-residue stretch at 55–227 (LVWIDCEMTG…SDIKESIAQL (173 aa)) folds into the Exonuclease domain. The active site involves tyrosine 184. Residues 240–269 (ETESVESIGSEQPESPSSSTSSLKRQRTDF) are disordered. The segment covering 245-261 (ESIGSEQPESPSSSTSS) has biased composition (low complexity).

The protein belongs to the oligoribonuclease family.

The protein resides in the mitochondrion. 3'-to-5' exoribonuclease specific for small oligoribonucleotides. This Saccharomyces cerevisiae (strain ATCC 204508 / S288c) (Baker's yeast) protein is Oligoribonuclease, mitochondrial (REX2).